Here is a 131-residue protein sequence, read N- to C-terminus: Large ribosomal subunit protein bL17 (131 aa).

Belongs to the bacterial ribosomal protein bL17 family. In terms of assembly, part of the 50S ribosomal subunit. Contacts protein L32.

The chain is Large ribosomal subunit protein bL17 from Bordetella parapertussis (strain 12822 / ATCC BAA-587 / NCTC 13253).